The following is a 146-amino-acid chain: Protein cornichon homolog 1 (146 aa).

3 consecutive transmembrane segments (helical) span residues 9 to 29 (IVSF…VICL), 61 to 81 (CLLF…PVTV), and 114 to 134 (LGFY…SAVY).

Belongs to the cornichon family.

Its subcellular location is the membrane. The polypeptide is Protein cornichon homolog 1 (Arabidopsis thaliana (Mouse-ear cress)).